The primary structure comprises 460 residues: Truncated surface protein (460 aa).

The N-terminal stretch at 1 to 31 (MRVKEIQRNYQHLWKWSLIILGMIMICKAIE) is a signal peptide. Cysteines 53 and 73 form a disulfide. Asn-87, Asn-135, Asn-139, Asn-148, Asn-177, Asn-180, Asn-181, Asn-194, Asn-231, Asn-238, Asn-259, Asn-273, Asn-286, and Asn-292 each carry an N-linked (GlcNAc...) asparagine; by host glycan. 5 disulfides stabilise this stretch: Cys-118-Cys-202, Cys-125-Cys-193, Cys-130-Cys-149, Cys-215-Cys-244, and Cys-225-Cys-236. The interval 130 to 148 (CIDVKNSTNNNTEEATITN) is V1. Positions 149-193 (CSFKVPTELKDKTETVHTLFYKLDVVPLNVTNNSSISSTYRLINC) are V2. The tract at residues 293–325 (CTRPGSDKKIRQSIRIGPGKVFYAKGGITGQAH) is V3. Cysteines 293 and 326 form a disulfide. N-linked (GlcNAc...) asparagine; by host glycans are attached at residues Asn-327, Asn-350, and Asn-356. A CD4-binding loop region spans residues 358-368 (SSGGDIEITTH). 3 disulfide bridges follow: Cys-372-Cys-439, Cys-379-Cys-412, and Cys-397-Cys-404. Positions 379 to 412 (CNTSELFTGIWNGTWDKNCTSTESNCTGNITLPC) are V4. N-linked (GlcNAc...) asparagine; by host glycans are attached at residues Asn-380, Asn-390, Asn-396, Asn-403, Asn-407, and Asn-442.

Its subcellular location is the virion membrane. The sequence is that of Truncated surface protein (env) from Human immunodeficiency virus type 1 group M subtype U (isolate Z3) (HIV-1).